Reading from the N-terminus, the 125-residue chain is Phosphoribosyl-AMP cyclohydrolase (125 aa).

A Mg(2+)-binding site is contributed by D74. Position 75 (C75) interacts with Zn(2+). Mg(2+) is bound by residues D76 and D78. The Zn(2+) site is built by C92 and C99.

This sequence belongs to the PRA-CH family. As to quaternary structure, homodimer. Requires Mg(2+) as cofactor. Zn(2+) serves as cofactor.

The protein localises to the cytoplasm. The enzyme catalyses 1-(5-phospho-beta-D-ribosyl)-5'-AMP + H2O = 1-(5-phospho-beta-D-ribosyl)-5-[(5-phospho-beta-D-ribosylamino)methylideneamino]imidazole-4-carboxamide. Its pathway is amino-acid biosynthesis; L-histidine biosynthesis; L-histidine from 5-phospho-alpha-D-ribose 1-diphosphate: step 3/9. Its function is as follows. Catalyzes the hydrolysis of the adenine ring of phosphoribosyl-AMP. This Geotalea uraniireducens (strain Rf4) (Geobacter uraniireducens) protein is Phosphoribosyl-AMP cyclohydrolase.